Here is a 1537-residue protein sequence, read N- to C-terminus: Flocculation protein FLO1 (1537 aa).

The N-terminal stretch at 1–24 (MTMPHRYMFLAVFTLLALTSVASG) is a signal peptide. Residues 74–249 (GGQTDISIDY…GTTVSDDFEG (176 aa)) enclose the PA14 domain. Asn-135 and Asn-187 each carry an N-linked (GlcNAc...) asparagine glycan. Positions 197 to 240 (GGSLPPNIEGTVYMYAGYYYPMKVVYSNAVSWGTLPISVTLPDG) are sugar recognition. Asn-262 is a glycosylation site (N-linked (GlcNAc...) asparagine). 18 tandem repeats follow at residues 278–322 (TTTE…STII), 323–367 (TTTE…TTAI), 368–412 (TTTE…TTAM), 413–457 (TTTQ…TTAM), 458–502 (TTTQ…TTAM), 503–547 (TTTQ…TTAM), 548–592 (TTPQ…TTAI), 593–637 (TTTE…TTAI), 638–682 (TTTQ…TTAM), 683–727 (TTTQ…TTAM), 728–772 (TTTQ…GLIS), 773–817 (TTTE…GLVT), 818–862 (TTTE…GLIS), 863–907 (TTTE…GLIS), 908–952 (TTTE…GLIS), 953–997 (TTTE…GLIS), 998–1042 (TTTE…GLVT), and 1043–1087 (TTTE…ISSS). Residues 278-1087 (TTTEPWTGTF…KTPTTAISSS (810 aa)) are 18 X 45 AA approximate tandem repeats, Thr-rich. N-linked (GlcNAc...) asparagine glycosylation is found at Asn-329, Asn-374, Asn-419, Asn-464, Asn-509, Asn-554, Asn-599, Asn-644, Asn-689, and Asn-734. Disordered regions lie at residues 770–799 (LIST…NGQP) and 860–889 (LIST…NGQP). Residues 773 to 795 (TTTEPWTGTFTSTSTEMTTVTGT) show a composition bias toward low complexity. A compositionally biased stretch (low complexity) spans 863-885 (TTTEPWTGTFTSTSTEMTTITGT). The disordered stretch occupies residues 995 to 1024 (LISTTTEPWTGTFTSTSTEMTTVTGTNGQP). Positions 998 to 1020 (TTTEPWTGTFTSTSTEMTTVTGT) are enriched in low complexity. A glycan (N-linked (GlcNAc...) asparagine) is linked at Asn-1114. Tandem repeats lie at residues 1118 to 1137 (VISS…TSSP) and 1138 to 1157 (VISS…IFSE). Positions 1118-1157 (VISSSVISSSVTSSLFTSSPVISSSVISSSTTTSTSIFSE) are 2 X 20 AA approximate tandem repeats, Ser/Thr-rich. Positions 1161–1220 (SSVIPTSSSTSGSSESETSSAGSVSSSSFISSESSKSPTYSSSSLPLVTSATTSQETASS) are enriched in low complexity. Residues 1161 to 1232 (SSVIPTSSST…PATTTKTSEQ (72 aa)) are disordered. Residues 1222–1232 (PPATTTKTSEQ) show a composition bias toward polar residues. 6 tandem repeats follow at residues 1226-1276 (TTKT…CPIS), 1291-1341 (TTET…CPIS), 1342-1392 (TTES…RPQT), 1408-1416 (ETTTNTLAA), 1417-1425 (ETTTNTVAA), and 1426-1434 (ETITNTGAA). Residues 1226-1392 (TTKTSEQTTL…TVYPTWRPQT (167 aa)) form a 3 X 51 AA approximate repeats, Ser/Thr-rich region. Residues 1392 to 1404 (TANEESVSSKMNS) show a composition bias toward polar residues. A disordered region spans residues 1392–1414 (TANEESVSSKMNSATGETTTNTL). Low complexity predominate over residues 1405 to 1414 (ATGETTTNTL). The interval 1408–1434 (ETTTNTLAAETTTNTVAAETITNTGAA) is 3 X 9 AA approximate tandem repeats, Thr-rich. The disordered stretch occupies residues 1468 to 1497 (VSVSETGNTKSLTSSGLSTMSQQPRSTPAS). Residues 1472-1497 (ETGNTKSLTSSGLSTMSQQPRSTPAS) show a composition bias toward polar residues. Gly-1514 carries the GPI-anchor amidated glycine lipid modification. Residues 1515–1537 (SANSLLAGSGLSVFIASLLLAII) constitute a propeptide, removed in mature form.

This sequence belongs to the flocculin family. In terms of processing, extensively N- and O-glycosylated. Post-translationally, the GPI-anchor is attached to the protein in the endoplasmic reticulum and serves to target the protein to the cell surface. There, the glucosamine-inositol phospholipid moiety is cleaved off and the GPI-modified mannoprotein is covalently attached via its lipidless GPI glycan remnant to the 1,6-beta-glucan of the outer cell wall layer.

Its subcellular location is the cell membrane. It localises to the secreted. The protein localises to the cell wall. Functionally, cell wall protein that participates directly in adhesive cell-cell interactions during yeast flocculation, a reversible, asexual and Ca(2+)-dependent process in which cells adhere to form aggregates (flocs) consisting of thousands of cells. The lectin-like protein sticks out of the cell wall of flocculent cells and selectively binds mannose residues in the cell walls of adjacent cells. Activity is inhibited by mannose, but not by glucose, maltose, sucrose or galactose. Also involved in cell-substrate adhesion. The polypeptide is Flocculation protein FLO1 (FLO1) (Saccharomyces cerevisiae (strain ATCC 204508 / S288c) (Baker's yeast)).